The chain runs to 205 residues: GTP cyclohydrolase-2 (205 aa).

49-53 contacts GTP; it reads RLHSE. Cys54, Cys65, and Cys67 together coordinate Zn(2+). Residues Gln70, 92-94, and Thr114 contribute to the GTP site; that span reads EGR. Catalysis depends on Asp126, which acts as the Proton acceptor. Arg128 acts as the Nucleophile in catalysis. Residues Thr149 and Lys154 each contribute to the GTP site.

Belongs to the GTP cyclohydrolase II family. Zn(2+) is required as a cofactor.

It carries out the reaction GTP + 4 H2O = 2,5-diamino-6-hydroxy-4-(5-phosphoribosylamino)-pyrimidine + formate + 2 phosphate + 3 H(+). Its pathway is cofactor biosynthesis; riboflavin biosynthesis; 5-amino-6-(D-ribitylamino)uracil from GTP: step 1/4. Its function is as follows. Catalyzes the conversion of GTP to 2,5-diamino-6-ribosylamino-4(3H)-pyrimidinone 5'-phosphate (DARP), formate and pyrophosphate. In Pseudomonas entomophila (strain L48), this protein is GTP cyclohydrolase-2.